Consider the following 1235-residue polypeptide: Serine/threonine-protein kinase TAO2 (1235 aa).

Ser9 is modified (phosphoserine). The region spanning 28-281 (FSDLREIGHG…SEVLLKHRFV (254 aa)) is the Protein kinase domain. Residues 34–42 (IGHGSFGAV) and Lys57 each bind ATP. Position 106–108 (106–108 (EYC)) interacts with staurosporine. Residue Asp151 is the Proton acceptor of the active site. Gly155 provides a ligand contact to staurosporine. Residue Ser181 is modified to Phosphoserine. The segment at 318-457 (QEAPNGPGAE…PTSTSSSSAR (140 aa)) is disordered. Over residues 350-374 (SSHSVPSMSISASSQSSSVNSLADA) the composition is skewed to low complexity. Acidic residues predominate over residues 375–395 (SDNEEEEEEEEEEEEEEEEEG). Over residues 396-411 (PESREMAMMQEGEHTV) the composition is skewed to basic and acidic residues. Phosphoserine is present on Ser416. Coiled coils occupy residues 488 to 523 (SALREQLSGYKRMRRQHQKQLLALESRLRGEREEHS) and 576 to 603 (KELAALLEAQKRTYKLRKEQLKEELQEN). Ser658 bears the Phosphoserine mark. Residues 683 to 715 (LRQHEATRELELRQLQAVQRTRAELTRLQHQTE) adopt a coiled-coil conformation. Residues Ser777, Ser825, and Ser827 each carry the phosphoserine modification. A disordered region spans residues 892–941 (GPVLTPVPEEEEEEEEEGGAPIGTPRDPGDGCPSPDIPPEPPPSHLRQYP). A compositionally biased stretch (acidic residues) spans 899 to 909 (PEEEEEEEEEG). Pro residues predominate over residues 926–935 (PDIPPEPPPS). 3 consecutive transmembrane segments (helical) span residues 967–987 (LLPLLLLLLLPLLAAQGGGGL), 989–1009 (AALLALEVGLVGLGASYLFLC), and 1014–1034 (LPPSLFLLLAQGTALGAVLSL). Arg1038 bears the Phosphoserine mark. 2 helical membrane passes run 1040 to 1060 (LMGVPLGLGAAWLLAWPSLAL) and 1170 to 1190 (LASCLPPWAVHILASWGLLKG). A disordered region spans residues 1210–1235 (SASRQLPPGTVAGRRSQTRRALPPWR).

Belongs to the protein kinase superfamily. STE Ser/Thr protein kinase family. STE20 subfamily. Self-associates. Interacts with MAP2K3 and MAP2K6. Interacts with tubulins. Interacts with MAP3K7 and interferes with MAP3K7-binding to CHUK and thus prevents NF-kappa-B activation. Isoform 2 interacts with PCDH8; this complex may also include CDH2. It depends on Mg(2+) as a cofactor. Autophosphorylated. Phosphorylated by ATM. In terms of processing, phosphorylated on Ser-1038 by MAPK14. This phosphorylation is required PCDH8 for endocytosis.

Its subcellular location is the cytoplasmic vesicle membrane. The protein resides in the cytoplasm. The protein localises to the cytoskeleton. It is found in the cell projection. It localises to the dendrite. It catalyses the reaction L-seryl-[protein] + ATP = O-phospho-L-seryl-[protein] + ADP + H(+). It carries out the reaction L-threonyl-[protein] + ATP = O-phospho-L-threonyl-[protein] + ADP + H(+). Its activity is regulated as follows. Moderately inhibited by staurosporine, a broad-range protein kinase inhibitor. In terms of biological role, serine/threonine-protein kinase involved in different processes such as membrane blebbing and apoptotic bodies formation DNA damage response and MAPK14/p38 MAPK stress-activated MAPK cascade. Phosphorylates itself, MBP, activated MAPK8, MAP2K3, MAP2K6 and tubulins. Activates the MAPK14/p38 MAPK signaling pathway through the specific activation and phosphorylation of the upstream MAP2K3 and MAP2K6 kinases. In response to DNA damage, involved in the G2/M transition DNA damage checkpoint by activating the p38/MAPK14 stress-activated MAPK cascade, probably by mediating phosphorylation of upstream MAP2K3 and MAP2K6 kinases. May affect microtubule organization and stability. May play a role in the osmotic stress-MAPK8 pathway. Prevents MAP3K7-mediated activation of CHUK, and thus NF-kappa-B activation. Isoform 2, but not isoform 1, is required for PCDH8 endocytosis. Following homophilic interactions between PCDH8 extracellular domains, isoform 2 phosphorylates and activates MAPK14/p38 MAPK which in turn phosphorylates isoform 2. This process leads to PCDH8 endocytosis and CDH2 cointernalization. Both isoforms are involved in MAPK14/p38 MAPK activation. This Rattus norvegicus (Rat) protein is Serine/threonine-protein kinase TAO2 (Taok2).